The sequence spans 535 residues: Peptide chain release factor 3 (535 aa).

A tr-type G domain is found at 8–276 (ARRRTFAIIS…ALVEQAPPPG (269 aa)). GTP is bound by residues 17–24 (SHPDAGKT), 85–89 (DTPGH), and 139–142 (NKMD).

It belongs to the TRAFAC class translation factor GTPase superfamily. Classic translation factor GTPase family. PrfC subfamily.

The protein localises to the cytoplasm. Functionally, increases the formation of ribosomal termination complexes and stimulates activities of RF-1 and RF-2. It binds guanine nucleotides and has strong preference for UGA stop codons. It may interact directly with the ribosome. The stimulation of RF-1 and RF-2 is significantly reduced by GTP and GDP, but not by GMP. The chain is Peptide chain release factor 3 from Bordetella petrii (strain ATCC BAA-461 / DSM 12804 / CCUG 43448).